The sequence spans 595 residues: Elongation factor 4 (595 aa).

One can recognise a tr-type G domain in the interval 2–183; the sequence is KNIRNFCIIA…AIVEQVPAPA (182 aa). GTP-binding positions include 14–19 and 130–133; these read DHGKST and NKVD.

Belongs to the TRAFAC class translation factor GTPase superfamily. Classic translation factor GTPase family. LepA subfamily.

The protein localises to the cell inner membrane. The catalysed reaction is GTP + H2O = GDP + phosphate + H(+). Required for accurate and efficient protein synthesis under certain stress conditions. May act as a fidelity factor of the translation reaction, by catalyzing a one-codon backward translocation of tRNAs on improperly translocated ribosomes. Back-translocation proceeds from a post-translocation (POST) complex to a pre-translocation (PRE) complex, thus giving elongation factor G a second chance to translocate the tRNAs correctly. Binds to ribosomes in a GTP-dependent manner. This Porphyromonas gingivalis (strain ATCC BAA-308 / W83) protein is Elongation factor 4.